A 221-amino-acid polypeptide reads, in one-letter code: Ribosomal RNA small subunit methyltransferase Nep1 (221 aa).

Residues glycine 174, glycine 179, and 196-201 (IGDETM) each bind S-adenosyl-L-methionine.

Belongs to the class IV-like SAM-binding methyltransferase superfamily. RNA methyltransferase NEP1 family. Homodimer.

The catalysed reaction is a pseudouridine in rRNA + S-adenosyl-L-methionine = an N(1)-methylpseudouridine in rRNA + S-adenosyl-L-homocysteine + H(+). Its function is as follows. Methyltransferase involved in ribosomal biogenesis. Specifically catalyzes the N1-methylation of the pseudouridine corresponding to position 914 in M.jannaschii 16S rRNA. The sequence is that of Ribosomal RNA small subunit methyltransferase Nep1 from Pyrobaculum islandicum (strain DSM 4184 / JCM 9189 / GEO3).